A 414-amino-acid polypeptide reads, in one-letter code: 2,3-diketo-5-methylthiopentyl-1-phosphate enolase (414 aa).

The active-site Proton acceptor is the lysine 99. Residues lysine 148, 174–177 (KDDE), histidine 265, glycine 338, and 360–361 (GG) contribute to the substrate site. Mg(2+) is bound by residues lysine 174, aspartate 176, and glutamate 177. Lysine 174 is subject to N6-carboxylysine.

Belongs to the RuBisCO large chain family. Type IV subfamily. Homodimer. The cofactor is Mg(2+).

It carries out the reaction 5-methylsulfanyl-2,3-dioxopentyl phosphate = 2-hydroxy-5-methylsulfanyl-3-oxopent-1-enyl phosphate. The protein operates within amino-acid biosynthesis; L-methionine biosynthesis via salvage pathway; L-methionine from S-methyl-5-thio-alpha-D-ribose 1-phosphate: step 3/6. In terms of biological role, catalyzes the enolization of 2,3-diketo-5-methylthiopentyl-1-phosphate (DK-MTP-1-P) into 2-hydroxy-3-keto-5-methylthiopentenyl-1-phosphate (HK-MTPenyl-1-P). The protein is 2,3-diketo-5-methylthiopentyl-1-phosphate enolase of Bacillus cereus (strain ATCC 14579 / DSM 31 / CCUG 7414 / JCM 2152 / NBRC 15305 / NCIMB 9373 / NCTC 2599 / NRRL B-3711).